The following is a 504-amino-acid chain: Glucose-6-phosphate isomerase (504 aa).

The Proton donor role is filled by glutamate 333. Residues histidine 364 and lysine 473 contribute to the active site.

Belongs to the GPI family.

The protein localises to the cytoplasm. It catalyses the reaction alpha-D-glucose 6-phosphate = beta-D-fructose 6-phosphate. It participates in carbohydrate biosynthesis; gluconeogenesis. It functions in the pathway carbohydrate degradation; glycolysis; D-glyceraldehyde 3-phosphate and glycerone phosphate from D-glucose: step 2/4. Functionally, catalyzes the reversible isomerization of glucose-6-phosphate to fructose-6-phosphate. The polypeptide is Glucose-6-phosphate isomerase (Stenotrophomonas maltophilia (strain K279a)).